A 313-amino-acid polypeptide reads, in one-letter code: Ribosomal protein uL3 glutamine methyltransferase (313 aa).

This sequence belongs to the protein N5-glutamine methyltransferase family. PrmB subfamily.

It catalyses the reaction L-glutaminyl-[ribosomal protein uL3] + S-adenosyl-L-methionine = N(5)-methyl-L-glutaminyl-[ribosomal protein uL3] + S-adenosyl-L-homocysteine + H(+). Functionally, methylates large ribosomal subunit protein uL3 on a specific glutamine residue. In Pasteurella multocida (strain Pm70), this protein is Ribosomal protein uL3 glutamine methyltransferase.